A 259-amino-acid chain; its full sequence is 5'-nucleotidase SurE (259 aa).

A divalent metal cation-binding residues include aspartate 8, aspartate 9, serine 40, and asparagine 92.

The protein belongs to the SurE nucleotidase family. Requires a divalent metal cation as cofactor.

It is found in the cytoplasm. It carries out the reaction a ribonucleoside 5'-phosphate + H2O = a ribonucleoside + phosphate. In terms of biological role, nucleotidase that shows phosphatase activity on nucleoside 5'-monophosphates. The polypeptide is 5'-nucleotidase SurE (Stenotrophomonas maltophilia (strain K279a)).